The chain runs to 129 residues: UPF0102 protein CT2262 (129 aa).

This sequence belongs to the UPF0102 family.

The sequence is that of UPF0102 protein CT2262 from Chlorobaculum tepidum (strain ATCC 49652 / DSM 12025 / NBRC 103806 / TLS) (Chlorobium tepidum).